Here is a 398-residue protein sequence, read N- to C-terminus: RNA-binding protein rnc1 (398 aa).

Positions 40 to 78 (KVSIPTPKPSTPLSTLTNGSTIQQSMTNQPEPTSQVPPI) are disordered. T50 bears the Phosphothreonine mark. The segment covering 57–76 (NGSTIQQSMTNQPEPTSQVP) has biased composition (polar residues). 2 KH domains span residues 93-157 (QLTL…YRFI) and 178-243 (PRKL…IWEI). Positions 274 to 290 (ASTASPQQVSPPAAPST) are enriched in low complexity. The disordered stretch occupies residues 274–295 (ASTASPQQVSPPAAPSTTSGEA). The 66-residue stretch at 320–385 (KVTQNISIPA…EENEKALFLL (66 aa)) folds into the KH 3 domain.

Post-translationally, phosphorylated by pmk1. Phosphorylation causes enhancement of the RNA-binding activity.

The protein resides in the cytoplasm. In terms of biological role, binds and stabilizes pmp1 mRNA and hence acts as a negative regulator of pmk1 signaling. Overexpression suppresses the Cl(-) sensitivity of calcineurin deletion. This is RNA-binding protein rnc1 from Schizosaccharomyces pombe (strain 972 / ATCC 24843) (Fission yeast).